A 320-amino-acid polypeptide reads, in one-letter code: 4-hydroxy-3-methylbut-2-enyl diphosphate reductase 2 (320 aa).

C18 contacts [4Fe-4S] cluster. Positions 47 and 81 each coordinate (2E)-4-hydroxy-3-methylbut-2-enyl diphosphate. Dimethylallyl diphosphate-binding residues include H47 and H81. Isopentenyl diphosphate-binding residues include H47 and H81. C103 contributes to the [4Fe-4S] cluster binding site. H131 lines the (2E)-4-hydroxy-3-methylbut-2-enyl diphosphate pocket. H131 serves as a coordination point for dimethylallyl diphosphate. H131 provides a ligand contact to isopentenyl diphosphate. E133 acts as the Proton donor in catalysis. Residue T172 coordinates (2E)-4-hydroxy-3-methylbut-2-enyl diphosphate. C202 provides a ligand contact to [4Fe-4S] cluster. S230, S231, N232, and S275 together coordinate (2E)-4-hydroxy-3-methylbut-2-enyl diphosphate. Residues S230, S231, N232, and S275 each coordinate dimethylallyl diphosphate. S230, S231, N232, and S275 together coordinate isopentenyl diphosphate.

The protein belongs to the IspH family. [4Fe-4S] cluster is required as a cofactor.

The enzyme catalyses isopentenyl diphosphate + 2 oxidized [2Fe-2S]-[ferredoxin] + H2O = (2E)-4-hydroxy-3-methylbut-2-enyl diphosphate + 2 reduced [2Fe-2S]-[ferredoxin] + 2 H(+). It carries out the reaction dimethylallyl diphosphate + 2 oxidized [2Fe-2S]-[ferredoxin] + H2O = (2E)-4-hydroxy-3-methylbut-2-enyl diphosphate + 2 reduced [2Fe-2S]-[ferredoxin] + 2 H(+). It participates in isoprenoid biosynthesis; dimethylallyl diphosphate biosynthesis; dimethylallyl diphosphate from (2E)-4-hydroxy-3-methylbutenyl diphosphate: step 1/1. Its pathway is isoprenoid biosynthesis; isopentenyl diphosphate biosynthesis via DXP pathway; isopentenyl diphosphate from 1-deoxy-D-xylulose 5-phosphate: step 6/6. In terms of biological role, catalyzes the conversion of 1-hydroxy-2-methyl-2-(E)-butenyl 4-diphosphate (HMBPP) into a mixture of isopentenyl diphosphate (IPP) and dimethylallyl diphosphate (DMAPP). Acts in the terminal step of the DOXP/MEP pathway for isoprenoid precursor biosynthesis. The protein is 4-hydroxy-3-methylbut-2-enyl diphosphate reductase 2 of Rhodopseudomonas palustris (strain ATCC BAA-98 / CGA009).